The primary structure comprises 151 residues: UPF0178 protein YaiI (151 aa).

It belongs to the UPF0178 family.

In Salmonella enteritidis PT4 (strain P125109), this protein is UPF0178 protein YaiI.